The following is a 344-amino-acid chain: Dihydroorotate dehydrogenase (quinone) (344 aa).

FMN-binding positions include 65–69 (AGFDK) and Thr-89. Residue Lys-69 participates in substrate binding. 114–118 (NRMGF) serves as a coordination point for substrate. Positions 145 and 178 each coordinate FMN. Position 178 (Asn-178) interacts with substrate. Ser-181 (nucleophile) is an active-site residue. Residue Asn-183 coordinates substrate. Positions 215 and 243 each coordinate FMN. Position 244 to 245 (244 to 245 (NT)) interacts with substrate. FMN is bound by residues Gly-269, Gly-298, and 319 to 320 (YT).

This sequence belongs to the dihydroorotate dehydrogenase family. Type 2 subfamily. Monomer. The cofactor is FMN.

The protein resides in the cell membrane. The catalysed reaction is (S)-dihydroorotate + a quinone = orotate + a quinol. Its pathway is pyrimidine metabolism; UMP biosynthesis via de novo pathway; orotate from (S)-dihydroorotate (quinone route): step 1/1. Its function is as follows. Catalyzes the conversion of dihydroorotate to orotate with quinone as electron acceptor. The polypeptide is Dihydroorotate dehydrogenase (quinone) (Clavibacter michiganensis subsp. michiganensis (strain NCPPB 382)).